Reading from the N-terminus, the 155-residue chain is Small ribosomal subunit protein uS7cz/uS7cy (155 aa).

It belongs to the universal ribosomal protein uS7 family. Part of the 30S ribosomal subunit.

The protein resides in the plastid. It localises to the chloroplast. In terms of biological role, one of the primary rRNA binding proteins, it binds directly to 16S rRNA where it nucleates assembly of the head domain of the 30S subunit. The protein is Small ribosomal subunit protein uS7cz/uS7cy (rps7-A) of Atropa belladonna (Belladonna).